The primary structure comprises 99 residues: Leydig cell tumor 10 kDa protein homolog (99 aa).

Residues 1–37 (MAQGQRKFQARKPAKSKTAATASEKNRGPRKGGRVIA) form a disordered region. Over residues 28–37 (GPRKGGRVIA) the composition is skewed to basic residues.

The protein belongs to the UPF0390 family.

In terms of biological role, may have a potential role in hypercalcemia of malignancy. The sequence is that of Leydig cell tumor 10 kDa protein homolog from Pongo abelii (Sumatran orangutan).